A 157-amino-acid polypeptide reads, in one-letter code: UPF0262 protein Rleg2_0240 (157 aa).

It belongs to the UPF0262 family.

The polypeptide is UPF0262 protein Rleg2_0240 (Rhizobium leguminosarum bv. trifolii (strain WSM2304)).